The chain runs to 119 residues: Ribosome-binding factor A (119 aa).

The protein belongs to the RbfA family. As to quaternary structure, monomer. Binds 30S ribosomal subunits, but not 50S ribosomal subunits or 70S ribosomes.

Its subcellular location is the cytoplasm. Its function is as follows. One of several proteins that assist in the late maturation steps of the functional core of the 30S ribosomal subunit. Associates with free 30S ribosomal subunits (but not with 30S subunits that are part of 70S ribosomes or polysomes). Required for efficient processing of 16S rRNA. May interact with the 5'-terminal helix region of 16S rRNA. This is Ribosome-binding factor A from Lactococcus lactis subsp. cremoris (strain SK11).